Reading from the N-terminus, the 272-residue chain is Protein alcS (272 aa).

A compositionally biased stretch (polar residues) spans methionine 1–threonine 14. The tract at residues methionine 1 to alanine 21 is disordered. The next 6 helical transmembrane spans lie at proline 63–tryptophan 83, isoleucine 91–leucine 111, valine 122–alanine 144, phenylalanine 164–alanine 184, valine 192–tryptophan 212, and leucine 225–valine 245.

Belongs to the acetate uptake transporter (AceTr) (TC 2.A.96) family.

Its subcellular location is the cell membrane. It is found in the cell septum. The polypeptide is Protein alcS (Aspergillus fumigatus (strain CBS 144.89 / FGSC A1163 / CEA10) (Neosartorya fumigata)).